We begin with the raw amino-acid sequence, 357 residues long: NADH-quinone oxidoreductase subunit H (357 aa).

8 helical membrane-spanning segments follow: residues 20 to 40 (WLVL…ILCV), 92 to 112 (ILFV…WAVV), 127 to 147 (LLYV…AGWA), 165 to 185 (VSYE…SGSL), 206 to 226 (FLSW…ISAV), 254 to 274 (MAFA…SCMA), 294 to 314 (IPGW…FVWF), and 329 to 349 (LGWK…AIWM).

It belongs to the complex I subunit 1 family. As to quaternary structure, NDH-1 is composed of 14 different subunits. Subunits NuoA, H, J, K, L, M, N constitute the membrane sector of the complex.

The protein localises to the cell inner membrane. The enzyme catalyses a quinone + NADH + 5 H(+)(in) = a quinol + NAD(+) + 4 H(+)(out). NDH-1 shuttles electrons from NADH, via FMN and iron-sulfur (Fe-S) centers, to quinones in the respiratory chain. The immediate electron acceptor for the enzyme in this species is believed to be ubiquinone. Couples the redox reaction to proton translocation (for every two electrons transferred, four hydrogen ions are translocated across the cytoplasmic membrane), and thus conserves the redox energy in a proton gradient. This subunit may bind ubiquinone. The sequence is that of NADH-quinone oxidoreductase subunit H from Bordetella petrii (strain ATCC BAA-461 / DSM 12804 / CCUG 43448).